The sequence spans 124 residues: Holo-[acyl-carrier-protein] synthase (124 aa).

Residues aspartate 8 and glutamate 56 each contribute to the Mg(2+) site.

The protein belongs to the P-Pant transferase superfamily. AcpS family. The cofactor is Mg(2+).

It localises to the cytoplasm. It catalyses the reaction apo-[ACP] + CoA = holo-[ACP] + adenosine 3',5'-bisphosphate + H(+). Transfers the 4'-phosphopantetheine moiety from coenzyme A to a Ser of acyl-carrier-protein. The polypeptide is Holo-[acyl-carrier-protein] synthase (Nitratidesulfovibrio vulgaris (strain ATCC 29579 / DSM 644 / CCUG 34227 / NCIMB 8303 / VKM B-1760 / Hildenborough) (Desulfovibrio vulgaris)).